We begin with the raw amino-acid sequence, 679 residues long: Pollen receptor-like kinase 4 (679 aa).

An N-terminal signal peptide occupies residues 1–39 (MLTWETPVMLASNTASTKKLAFITTFLIIVLCPVTMVMS). LRR repeat units lie at residues 118 to 141 (IKNL…VKNF), 142 to 165 (GALK…AFDG), 167 to 191 (HHLK…AYLP), 193 to 217 (LLEL…DLKL), and 234 to 257 (SNMD…PCSS). A compositionally biased stretch (low complexity) spans 252–269 (LSPCSSDSGSSPDLPSSP). The interval 252-271 (LSPCSSDSGSSPDLPSSPTE) is disordered. A helical transmembrane segment spans residues 278 to 298 (FFIIAIVLIVIGIILMIISLV). Positions 311–344 (SAYPSAGQDRTEKYNYDQSTDKDKAADSVTSYTS) are disordered. Residues 319–336 (DRTEKYNYDQSTDKDKAA) are compositionally biased toward basic and acidic residues. Residues 372–646 (RASAEVLGSG…RDAVEKIERL (275 aa)) enclose the Protein kinase domain. Phosphoserine is present on Ser-374. ATP contacts are provided by residues 378 to 386 (LGSGSFGSS) and Lys-400. 2 positions are modified to phosphoserine: Ser-452 and Ser-455. Thr-472 is modified (phosphothreonine). Phosphotyrosine is present on Tyr-542.

Belongs to the protein kinase superfamily. Ser/Thr protein kinase family. Interacts in vitro with ROPGEF1 (via PRONE domain). Interacts weakly with the GRI peptide. As to expression, expressed in pollen and/or in flowers, but not in leaves.

The protein resides in the membrane. The catalysed reaction is L-seryl-[protein] + ATP = O-phospho-L-seryl-[protein] + ADP + H(+). It catalyses the reaction L-threonyl-[protein] + ATP = O-phospho-L-threonyl-[protein] + ADP + H(+). Functionally, receptor-like kinase involved in the control of pollen germination and pollen tube polar growth. Can phosphorylate ROPGEF1 in vitro. The protein is Pollen receptor-like kinase 4 of Arabidopsis thaliana (Mouse-ear cress).